The chain runs to 365 residues: Holliday junction branch migration complex subunit RuvB (365 aa).

A compositionally biased stretch (polar residues) spans 1–10 (MAIVSSNAAS). Residues 1-48 (MAIVSSNAASQRPRPDRGPDRVPNRVVDGARQAEDDRDPGRVGAKEDS) form a disordered region. Composition is skewed to basic and acidic residues over residues 13–23 (PRPDRGPDRVP) and 31–48 (RQAE…KEDS). The tract at residues 13–210 (PRPDRGPDRV…FGLIQRLEFY (198 aa)) is large ATPase domain (RuvB-L). ATP-binding residues include Leu-49, Arg-50, Gly-91, Lys-94, Thr-95, Thr-96, Arg-200, Tyr-210, and Arg-247. A Mg(2+)-binding site is contributed by Thr-95. Residues 211 to 282 (GLEDLQAIVE…LVDEALTLHR (72 aa)) form a small ATPAse domain (RuvB-S) region. The head domain (RuvB-H) stretch occupies residues 285-365 (GRGLDASDRR…GWPYPQEQAA (81 aa)). The DNA site is built by Arg-340 and Arg-345.

Belongs to the RuvB family. As to quaternary structure, homohexamer. Forms an RuvA(8)-RuvB(12)-Holliday junction (HJ) complex. HJ DNA is sandwiched between 2 RuvA tetramers; dsDNA enters through RuvA and exits via RuvB. An RuvB hexamer assembles on each DNA strand where it exits the tetramer. Each RuvB hexamer is contacted by two RuvA subunits (via domain III) on 2 adjacent RuvB subunits; this complex drives branch migration. In the full resolvosome a probable DNA-RuvA(4)-RuvB(12)-RuvC(2) complex forms which resolves the HJ.

The protein resides in the cytoplasm. The enzyme catalyses ATP + H2O = ADP + phosphate + H(+). Its function is as follows. The RuvA-RuvB-RuvC complex processes Holliday junction (HJ) DNA during genetic recombination and DNA repair, while the RuvA-RuvB complex plays an important role in the rescue of blocked DNA replication forks via replication fork reversal (RFR). RuvA specifically binds to HJ cruciform DNA, conferring on it an open structure. The RuvB hexamer acts as an ATP-dependent pump, pulling dsDNA into and through the RuvAB complex. RuvB forms 2 homohexamers on either side of HJ DNA bound by 1 or 2 RuvA tetramers; 4 subunits per hexamer contact DNA at a time. Coordinated motions by a converter formed by DNA-disengaged RuvB subunits stimulates ATP hydrolysis and nucleotide exchange. Immobilization of the converter enables RuvB to convert the ATP-contained energy into a lever motion, pulling 2 nucleotides of DNA out of the RuvA tetramer per ATP hydrolyzed, thus driving DNA branch migration. The RuvB motors rotate together with the DNA substrate, which together with the progressing nucleotide cycle form the mechanistic basis for DNA recombination by continuous HJ branch migration. Branch migration allows RuvC to scan DNA until it finds its consensus sequence, where it cleaves and resolves cruciform DNA. This chain is Holliday junction branch migration complex subunit RuvB, found in Synechococcus sp. (strain WH7803).